We begin with the raw amino-acid sequence, 78 residues long: Large ribosomal subunit protein uL29 (78 aa).

The protein belongs to the universal ribosomal protein uL29 family.

This is Large ribosomal subunit protein uL29 from Rippkaea orientalis (strain PCC 8801 / RF-1) (Cyanothece sp. (strain PCC 8801)).